A 509-amino-acid polypeptide reads, in one-letter code: UDP-N-acetylmuramoyl-L-alanyl-D-glutamate--2,6-diaminopimelate ligase (509 aa).

A UDP-N-acetyl-alpha-D-muramoyl-L-alanyl-D-glutamate-binding site is contributed by serine 32. Position 117–123 (117–123) interacts with ATP; the sequence is GTNGKTT. UDP-N-acetyl-alpha-D-muramoyl-L-alanyl-D-glutamate contacts are provided by residues 159 to 160, serine 186, glutamine 192, and arginine 194; that span reads TT. The residue at position 226 (lysine 226) is an N6-carboxylysine. Meso-2,6-diaminopimelate-binding positions include arginine 401, 425–428, glycine 476, and glutamate 480; that span reads DNPR. A Meso-diaminopimelate recognition motif motif is present at residues 425–428; it reads DNPR.

Belongs to the MurCDEF family. MurE subfamily. Requires Mg(2+) as cofactor. In terms of processing, carboxylation is probably crucial for Mg(2+) binding and, consequently, for the gamma-phosphate positioning of ATP.

The protein localises to the cytoplasm. It carries out the reaction UDP-N-acetyl-alpha-D-muramoyl-L-alanyl-D-glutamate + meso-2,6-diaminopimelate + ATP = UDP-N-acetyl-alpha-D-muramoyl-L-alanyl-gamma-D-glutamyl-meso-2,6-diaminopimelate + ADP + phosphate + H(+). Its pathway is cell wall biogenesis; peptidoglycan biosynthesis. Catalyzes the addition of meso-diaminopimelic acid to the nucleotide precursor UDP-N-acetylmuramoyl-L-alanyl-D-glutamate (UMAG) in the biosynthesis of bacterial cell-wall peptidoglycan. In Prochlorococcus marinus (strain NATL2A), this protein is UDP-N-acetylmuramoyl-L-alanyl-D-glutamate--2,6-diaminopimelate ligase.